The following is a 778-amino-acid chain: DNA topoisomerase 1 (778 aa).

The interval 1 to 141 is disordered; that stretch reads MNSSDEEDIA…ETPEEDQGYK (141 aa). Over residues 17 to 26 the composition is skewed to low complexity; sequence KSSSITSAST. 2 stretches are compositionally biased toward basic and acidic residues: residues 71–83 and 100–121; these read VKTETKVKKEPKS and EKTTVKKESKATSTKVKEESKT. The segment covering 122–131 has biased composition (polar residues); the sequence is QSDSQASVKS. Interaction with DNA regions lie at residues 367 to 368, 430 to 435, and 522 to 524; these read KY, RAGGEK, and TAK. Positions 374-778 constitute a Topo IB-type catalytic domain; sequence NSSVKGQSDF…IESADENWRF (405 aa). Tyr-736 serves as the catalytic O-(3'-phospho-DNA)-tyrosine intermediate.

The protein belongs to the type IB topoisomerase family.

It carries out the reaction ATP-independent breakage of single-stranded DNA, followed by passage and rejoining.. Its function is as follows. Releases the supercoiling and torsional tension of DNA introduced during the DNA replication and transcription by transiently cleaving and rejoining one strand of the DNA duplex. Introduces a single-strand break via transesterification at a target site in duplex DNA. The scissile phosphodiester is attacked by the catalytic tyrosine of the enzyme, resulting in the formation of a DNA-(3'-phosphotyrosyl)-enzyme intermediate and the expulsion of a 5'-OH DNA strand. The free DNA strand then rotates around the intact phosphodiester bond on the opposing strand, thus removing DNA supercoils. Finally, in the religation step, the DNA 5'-OH attacks the covalent intermediate to expel the active-site tyrosine and restore the DNA phosphodiester backbone. The protein is DNA topoisomerase 1 (TOP1) of Candida albicans (Yeast).